Reading from the N-terminus, the 433-residue chain is Enolase (433 aa).

Residue Gln167 participates in (2R)-2-phosphoglycerate binding. Glu209 (proton donor) is an active-site residue. Asp246, Glu291, and Asp318 together coordinate Mg(2+). (2R)-2-phosphoglycerate contacts are provided by Lys343, Arg372, Ser373, and Lys394. Lys343 (proton acceptor) is an active-site residue.

The protein belongs to the enolase family. As to quaternary structure, component of the RNA degradosome, a multiprotein complex involved in RNA processing and mRNA degradation. It depends on Mg(2+) as a cofactor.

The protein localises to the cytoplasm. Its subcellular location is the secreted. It is found in the cell surface. It catalyses the reaction (2R)-2-phosphoglycerate = phosphoenolpyruvate + H2O. It functions in the pathway carbohydrate degradation; glycolysis; pyruvate from D-glyceraldehyde 3-phosphate: step 4/5. Functionally, catalyzes the reversible conversion of 2-phosphoglycerate (2-PG) into phosphoenolpyruvate (PEP). It is essential for the degradation of carbohydrates via glycolysis. This chain is Enolase, found in Histophilus somni (strain 129Pt) (Haemophilus somnus).